A 276-amino-acid chain; its full sequence is Undecaprenyl-diphosphatase (276 aa).

The next 6 membrane-spanning stretches (helical) occupy residues 43 to 63, 85 to 105, 109 to 129, 183 to 203, 214 to 234, and 249 to 269; these read RAMA…VWEF, GNLL…ADLI, LFNP…MLWA, AATE…AVYS, ADLP…MIAV, and FAWY…FGWV.

The protein belongs to the UppP family.

The protein resides in the cell inner membrane. The catalysed reaction is di-trans,octa-cis-undecaprenyl diphosphate + H2O = di-trans,octa-cis-undecaprenyl phosphate + phosphate + H(+). In terms of biological role, catalyzes the dephosphorylation of undecaprenyl diphosphate (UPP). Confers resistance to bacitracin. The polypeptide is Undecaprenyl-diphosphatase (Pseudomonas putida (strain GB-1)).